Reading from the N-terminus, the 274-residue chain is Ethanolamine ammonia-lyase small subunit (274 aa).

Valine 161, glutamate 182, and cysteine 211 together coordinate adenosylcob(III)alamin.

This sequence belongs to the EutC family. As to quaternary structure, the basic unit is a heterodimer which dimerizes to form tetramers. The heterotetramers trimerize; 6 large subunits form a core ring with 6 small subunits projecting outwards. The cofactor is adenosylcob(III)alamin.

The protein localises to the bacterial microcompartment. The enzyme catalyses ethanolamine = acetaldehyde + NH4(+). It participates in amine and polyamine degradation; ethanolamine degradation. Functionally, catalyzes the deamination of various vicinal amino-alcohols to oxo compounds. Allows this organism to utilize ethanolamine as the sole source of nitrogen and carbon in the presence of external vitamin B12. This is Ethanolamine ammonia-lyase small subunit from Pseudomonas fluorescens (strain Pf0-1).